We begin with the raw amino-acid sequence, 399 residues long: Delta(12) acyl-lipid conjugase (11E,13E-forming) (399 aa).

A disordered region spans residues 11 to 30; sequence RNGGGPKKKMGPGQGLGPGE. A run of 2 helical transmembrane segments spans residues 61–81 and 93–113; these read FSYL…ADTY and LAWP…WGIA. Positions 114 to 118 match the Histidine box-1 motif; it reads HDCGH. A helical transmembrane segment spans residues 126–146; the sequence is LVDDVVGFLIHSLVFVPYFSF. A Histidine box-2 motif is present at residues 150 to 154; it reads HRRHH. Helical transmembrane passes span 188–208, 232–252, and 258–278; these read VFII…FNIS, VLVH…YRIA, and GWLI…VVLI. The Histidine box-3 signature appears at 325–329; that stretch reads HVVHH.

The protein belongs to the fatty acid desaturase type 1 family. Expressed in developing seeds, but not in leaves.

The protein localises to the membrane. The enzyme catalyses a (9Z,12Z)-octadecadienoyl-containing glycerolipid + 2 Fe(II)-[cytochrome b5] + O2 + 2 H(+) = a (9Z,11E,13E)-octadecatrienoyl-containing glycerolipid + 2 Fe(III)-[cytochrome b5] + 2 H2O. It catalyses the reaction (9Z,12Z,15Z)-octadecatrienoyl-containing glycerolipid + 2 Fe(II)-[cytochrome b5] + O2 + 2 H(+) = a (9Z,11E,13E,15Z)-octadecatetraenoyl-containing glycerolipid + 2 Fe(III)-[cytochrome b5] + 2 H2O. It functions in the pathway lipid metabolism; polyunsaturated fatty acid biosynthesis. In terms of biological role, converts linoleic acid to alpha-eleostearic acid (18:3(9Z,11E,13E)) and alpha-linolenic acid to alpha-parinaric acid (18:4(9Z,11E, 13E, 15Z)). Converts a single cis double bond at carbon 12 to two conjugated trans bonds at positions 11 and 13. The sequence is that of Delta(12) acyl-lipid conjugase (11E,13E-forming) from Momordica charantia (Bitter gourd).